The primary structure comprises 179 residues: Large ribosomal subunit protein uL6 (179 aa).

It belongs to the universal ribosomal protein uL6 family. In terms of assembly, part of the 50S ribosomal subunit.

This protein binds to the 23S rRNA, and is important in its secondary structure. It is located near the subunit interface in the base of the L7/L12 stalk, and near the tRNA binding site of the peptidyltransferase center. The protein is Large ribosomal subunit protein uL6 of Prochlorococcus marinus (strain MIT 9515).